We begin with the raw amino-acid sequence, 251 residues long: tRNA (guanine-N(7)-)-methyltransferase (251 aa).

The S-adenosyl-L-methionine site is built by E80, E105, D132, and D155. Residue D155 is part of the active site. Substrate contacts are provided by residues K159, D191, and 228–231; that span reads TKFE.

Belongs to the class I-like SAM-binding methyltransferase superfamily. TrmB family.

It carries out the reaction guanosine(46) in tRNA + S-adenosyl-L-methionine = N(7)-methylguanosine(46) in tRNA + S-adenosyl-L-homocysteine. The protein operates within tRNA modification; N(7)-methylguanine-tRNA biosynthesis. In terms of biological role, catalyzes the formation of N(7)-methylguanine at position 46 (m7G46) in tRNA. This is tRNA (guanine-N(7)-)-methyltransferase from Histophilus somni (strain 129Pt) (Haemophilus somnus).